Reading from the N-terminus, the 319-residue chain is MIDVGDKAVTERTARAEGWIRLAPEVYQRVTQGQLPKGDGFLLAQVAGIQGAKRTADLLPLCHPLPIEGVKIDCQPLADSQTIRVEARVRTTGKTGVEMEALAAVSAALLCLYDLTKMFDATAEIGGIGLLEKTGGKSGHWQRPAIAPDVAPTGALAGVFATVITVSDRVAADQAEDRSGPLIQNWLTDQAATIATATCVADEPALIQAAIQAAIAQGSALILLTGGTGLGPRDRTPEAIADLGAIPVPGIGEALRQAGRSETVMTWLSRSGGWMLEGSFVIALPGSSRAVSSGLAMLQPLLPHSLAILKGADHGTVKG.

Positions 1 to 145 (MIDVGDKAVT…GKSGHWQRPA (145 aa)) are molybdenum cofactor biosynthesis protein C. Residues 61 to 63 (LCH) and 99 to 100 (ME) each bind substrate. Asp114 is an active-site residue. The molybdenum cofactor biosynthesis protein B stretch occupies residues 146-319 (IAPDVAPTGA…KGADHGTVKG (174 aa)).

The protein in the N-terminal section; belongs to the MoaC family. This sequence in the C-terminal section; belongs to the MoaB/Mog family.

It carries out the reaction (8S)-3',8-cyclo-7,8-dihydroguanosine 5'-triphosphate = cyclic pyranopterin phosphate + diphosphate. The protein operates within cofactor biosynthesis; molybdopterin biosynthesis. Catalyzes the conversion of (8S)-3',8-cyclo-7,8-dihydroguanosine 5'-triphosphate to cyclic pyranopterin monophosphate (cPMP). This is Molybdenum cofactor biosynthesis bifunctional protein (moaCB) from Synechococcus elongatus (strain ATCC 33912 / PCC 7942 / FACHB-805) (Anacystis nidulans R2).